A 293-amino-acid polypeptide reads, in one-letter code: 4-diphosphocytidyl-2-C-methyl-D-erythritol kinase (293 aa).

Lysine 16 is a catalytic residue. 99-109 lines the ATP pocket; it reads PMGAGLGGGSS. Aspartate 141 is a catalytic residue.

This sequence belongs to the GHMP kinase family. IspE subfamily.

It catalyses the reaction 4-CDP-2-C-methyl-D-erythritol + ATP = 4-CDP-2-C-methyl-D-erythritol 2-phosphate + ADP + H(+). Its pathway is isoprenoid biosynthesis; isopentenyl diphosphate biosynthesis via DXP pathway; isopentenyl diphosphate from 1-deoxy-D-xylulose 5-phosphate: step 3/6. Its function is as follows. Catalyzes the phosphorylation of the position 2 hydroxy group of 4-diphosphocytidyl-2C-methyl-D-erythritol. This is 4-diphosphocytidyl-2-C-methyl-D-erythritol kinase from Burkholderia thailandensis (strain ATCC 700388 / DSM 13276 / CCUG 48851 / CIP 106301 / E264).